A 412-amino-acid polypeptide reads, in one-letter code: Acyl-[acyl-carrier-protein] hydrolase FATB3, chloroplastic (412 aa).

Residues 1-25 (MVAAAASSAFFSFPTPGTSPKPGKF) show a composition bias toward low complexity. The transit peptide at 1–50 (MVAAAASSAFFSFPTPGTSPKPGKFGNWPSSLSIPFNPKSNHNGGIQVKA) directs the protein to the chloroplast. A disordered region spans residues 1–63 (MVAAAASSAF…AHPKANGSAV (63 aa)). The segment covering 28 to 44 (WPSSLSIPFNPKSNHNG) has biased composition (polar residues). Residues N310, H312, and C347 contribute to the active site. The segment at 393–412 (NAGATGAVSTGKTSNGNSVS) is disordered. Residues 399-412 (AVSTGKTSNGNSVS) show a composition bias toward polar residues.

The protein belongs to the acyl-ACP thioesterase family.

The protein localises to the plastid. It localises to the chloroplast. It carries out the reaction tetradecanoyl-[ACP] + H2O = tetradecanoate + holo-[ACP] + H(+). In terms of biological role, plays an essential role in chain termination during de novo fatty acid synthesis. Possesses thioesterase activity for medium chain acyl-ACPs. Main substrate is 14:0. The protein is Acyl-[acyl-carrier-protein] hydrolase FATB3, chloroplastic of Cuphea viscosissima (Blue waxweed).